Reading from the N-terminus, the 411-residue chain is Replication factor C subunit 2 (411 aa).

A disordered region spans residues 1-36; that stretch reads MADFFNLKARQQAAAQASSSKTPTSKQESNRLQPWV. Over residues 11-27 the composition is skewed to low complexity; the sequence is QQAAAQASSSKTPTSKQ. ATP-binding positions include V36, R40, 73–81, N195, and R253; that span reads GPPGTGKTS.

This sequence belongs to the activator 1 small subunits family. Heteropentamer of subunits RFC1, RFC2, RFC3, RFC4 and RFC5 that forms a complex with PCNA in the presence of ATP.

The protein localises to the nucleus. The elongation of primed DNA templates by DNA polymerase delta and epsilon requires the action of the accessory proteins proliferating cell nuclear antigen (PCNA) and activator 1. Subunit 2 binds ATP and single-stranded DNA. The sequence is that of Replication factor C subunit 2 (RFC2) from Phaeosphaeria nodorum (strain SN15 / ATCC MYA-4574 / FGSC 10173) (Glume blotch fungus).